We begin with the raw amino-acid sequence, 91 residues long: LYR motif-containing protein 4 (91 aa).

Pantetheine 4'-phosphate-binding residues include arginine 6 and lysine 44. N6-succinyllysine is present on lysine 47.

The protein belongs to the complex I LYR family. Homodimer. Component of the mitochondrial core iron-sulfur cluster (ISC) complex composed of NFS1, LYRM4, NDUFAB1, ISCU, FXN, and FDX2; this complex is a heterohexamer containing two copies of each monomer. Component of the cyteine desulfurase complex composed of NFS1, LYRM4 and NDUFAB1; this complex contributes to the stability and cysteine desulfurase activity of NFS1. Interacts with FXN; this interaction is nickel-dependent. Interacts with the cytoplasmic form of NFS1; the complex increases the stability of NFS1. Forms a complex with the cytoplasmic form of NFS1; this complex increases the stability and cysteine desulfurase activity of NFS1. Interacts with NFS1.

The protein resides in the mitochondrion. The protein localises to the nucleus. It functions in the pathway cofactor biosynthesis; iron-sulfur cluster biosynthesis. Its function is as follows. Stabilizing factor, of the core iron-sulfur cluster (ISC) assembly complex, that regulates, in association with NDUFAB1, the stability and the cysteine desulfurase activity of NFS1 and participates in the [2Fe-2S] clusters assembly on the scaffolding protein ISCU. The core iron-sulfur cluster (ISC) assembly complex is involved in the de novo synthesis of a [2Fe-2S] cluster, the first step of the mitochondrial iron-sulfur protein biogenesis. This process is initiated by the cysteine desulfurase complex (NFS1:LYRM4:NDUFAB1) that produces persulfide which is delivered on the scaffold protein ISCU in a FXN-dependent manner. Then this complex is stabilized by FDX2 which provides reducing equivalents to accomplish the [2Fe-2S] cluster assembly. Finally, the [2Fe-2S] cluster is transferred from ISCU to chaperone proteins, including HSCB, HSPA9 and GLRX5. May also participates in the iron-sulfur protein biogenesis in the cytoplasm through its interaction with the cytoplasmic form of NFS1. This chain is LYR motif-containing protein 4, found in Bos taurus (Bovine).